We begin with the raw amino-acid sequence, 507 residues long: ATP synthase subunit alpha, chloroplastic (507 aa).

Position 170–177 (170–177 (GDRQTGKT)) interacts with ATP.

Belongs to the ATPase alpha/beta chains family. As to quaternary structure, F-type ATPases have 2 components, CF(1) - the catalytic core - and CF(0) - the membrane proton channel. CF(1) has five subunits: alpha(3), beta(3), gamma(1), delta(1), epsilon(1). CF(0) has four main subunits: a, b, b' and c.

The protein resides in the plastid. It localises to the chloroplast thylakoid membrane. It catalyses the reaction ATP + H2O + 4 H(+)(in) = ADP + phosphate + 5 H(+)(out). In terms of biological role, produces ATP from ADP in the presence of a proton gradient across the membrane. The alpha chain is a regulatory subunit. This is ATP synthase subunit alpha, chloroplastic from Tetradesmus obliquus (Green alga).